We begin with the raw amino-acid sequence, 311 residues long: Tricarboxylate transport protein, mitochondrial (311 aa).

Positions 1 to 13 are cleaved as a propeptide — removed in mature form; the sequence is MAAPRGPRALSAA. The tract at residues 1-21 is disordered; it reads MAAPRGPRALSAAAPGSGKPK. Solcar repeat units lie at residues 23-111, 122-208, and 218-303; these read THPG…LSNH, RRGL…LRNW, and MNPL…VVKL. The next 3 membrane-spanning stretches (helical) occupy residues 29–46, 86–105, and 129–143; these read ILAGGLAGGIEICITFPT, GLSSLLYGSIPKAAVRFGMF, and LGAGVAEAVVVVCPM. S156 carries the post-translational modification Phosphoserine. Helical transmembrane passes span 183 to 202, 224 to 241, and 278 to 297; these read GLTATVLKQGSNQAIRFFVM, GVFGATAGAASVFGNTPL, and GTVPRLGRVCLDVAIVFIIY.

This sequence belongs to the mitochondrial carrier (TC 2.A.29) family. Possesses a short cleavable presequence, which, however, is found to be dispensable both for targeting to mitochondria and insertion into the inner membrane. However, the presequence is required to keep SLC25A1 in a soluble state and thus in an import-competent state. Mature SLC25A1 lacking the presequence is prone to aggregation. Expressed minimally but ubiquitously throughout the adult brain. Detected at higher levels in the olfactory bulb, neocortex and cerebellum. Also expressed in a subset of large cells in the globus pallidus.

The protein localises to the mitochondrion inner membrane. It is found in the mitochondrion membrane. It carries out the reaction (S)-malate(in) + citrate(out) = (S)-malate(out) + citrate(in). The catalysed reaction is D-threo-isocitrate(in) + citrate(out) = D-threo-isocitrate(out) + citrate(in). The enzyme catalyses citrate(out) + succinate(in) = citrate(in) + succinate(out). It catalyses the reaction cis-aconitate(in) + citrate(out) = cis-aconitate(out) + citrate(in). It carries out the reaction trans-aconitate(in) + citrate(out) = trans-aconitate(out) + citrate(in). The catalysed reaction is phosphoenolpyruvate(in) + citrate(out) = phosphoenolpyruvate(out) + citrate(in). The enzyme catalyses maleate(in) + citrate(out) = maleate(out) + citrate(in). Functionally, mitochondrial electroneutral antiporter that exports citrate from the mitochondria into the cytosol in exchange for malate. Also able to mediate the exchange of citrate for isocitrate, phosphoenolpyruvate, cis-aconitate and to a lesser extent trans-aconitate, maleate and succinate. In the cytoplasm, citrate plays important roles in fatty acid and sterol synthesis, regulation of glycolysis, protein acetylation, and other physiopathological processes. This chain is Tricarboxylate transport protein, mitochondrial, found in Mus musculus (Mouse).